The chain runs to 416 residues: Adenylosuccinate synthetase (416 aa).

GTP-binding positions include 13–19 (GDEGKGK) and 41–43 (GHT). Residue D14 is the Proton acceptor of the active site. Positions 14 and 41 each coordinate Mg(2+). IMP is bound by residues 14–17 (DEGK), 39–42 (NAGH), T126, R140, Q220, T235, and R299. The Proton donor role is filled by H42. 295–301 (VSTGRKR) lines the substrate pocket. GTP-binding positions include R301, 327–329 (KLD), and 405–407 (STS).

Belongs to the adenylosuccinate synthetase family. Homodimer. The cofactor is Mg(2+).

Its subcellular location is the cytoplasm. The enzyme catalyses IMP + L-aspartate + GTP = N(6)-(1,2-dicarboxyethyl)-AMP + GDP + phosphate + 2 H(+). It participates in purine metabolism; AMP biosynthesis via de novo pathway; AMP from IMP: step 1/2. Plays an important role in the de novo pathway of purine nucleotide biosynthesis. Catalyzes the first committed step in the biosynthesis of AMP from IMP. In Campylobacter lari (strain RM2100 / D67 / ATCC BAA-1060), this protein is Adenylosuccinate synthetase.